Reading from the N-terminus, the 354-residue chain is Caffeic acid 3-O-methyltransferase (354 aa).

121–127 (MNQDKVL) is a binding site for substrate. The substrate binding stretch occupies residues 153–171 (AFEYHGKDQRFNKVFNSGM). 5 residues coordinate S-adenosyl-L-methionine: G199, D222, D242, M243, and K256. The Proton acceptor role is filled by H260.

It belongs to the class I-like SAM-binding methyltransferase superfamily. Cation-independent O-methyltransferase family. COMT subfamily. In terms of assembly, homodimer.

The enzyme catalyses (E)-caffeate + S-adenosyl-L-methionine = (E)-ferulate + S-adenosyl-L-homocysteine + H(+). Its pathway is aromatic compound metabolism; phenylpropanoid biosynthesis. Catalyzes the conversion of caffeic acid to ferulic acid and of 5-hydroxyferulic acid to sinapic acid. The resulting products may subsequently be converted to the corresponding alcohols that are incorporated into lignins. This chain is Caffeic acid 3-O-methyltransferase, found in Zinnia elegans (Garden zinnia).